Consider the following 210-residue polypeptide: Probable HTH-type transcriptional regulator ArpR (210 aa).

The HTH tetR-type domain occupies 10–70; the sequence is QETRAQIIEA…ALLDSLHETH (61 aa). Residues 33–52 constitute a DNA-binding region (H-T-H motif); it reads TLADIAELAGVTRGAIYWHF.

In terms of biological role, probable regulatory protein for the antibiotic efflux pump arpABC operon. May function as a repressor. This is Probable HTH-type transcriptional regulator ArpR (arpR) from Pseudomonas putida (Arthrobacter siderocapsulatus).